Consider the following 142-residue polypeptide: Small ribosomal subunit protein bS6 (142 aa).

Residues 110-142 (NKKPSHAKEKHEKTEHAHSHHAEEAKSTESHSE) form a disordered region.

This sequence belongs to the bacterial ribosomal protein bS6 family.

In terms of biological role, binds together with bS18 to 16S ribosomal RNA. The protein is Small ribosomal subunit protein bS6 of Helicobacter pylori (strain G27).